Here is a 548-residue protein sequence, read N- to C-terminus: Chaperonin GroEL (548 aa).

Residues 30–33 (TLGP), Lys-51, 87–91 (DGTTT), Gly-415, 478–480 (NAA), and Asp-494 contribute to the ATP site.

This sequence belongs to the chaperonin (HSP60) family. In terms of assembly, forms a cylinder of 14 subunits composed of two heptameric rings stacked back-to-back. Interacts with the co-chaperonin GroES.

The protein localises to the cytoplasm. It catalyses the reaction ATP + H2O + a folded polypeptide = ADP + phosphate + an unfolded polypeptide.. Together with its co-chaperonin GroES, plays an essential role in assisting protein folding. The GroEL-GroES system forms a nano-cage that allows encapsulation of the non-native substrate proteins and provides a physical environment optimized to promote and accelerate protein folding. This chain is Chaperonin GroEL, found in Janthinobacterium sp. (strain Marseille) (Minibacterium massiliensis).